A 158-amino-acid polypeptide reads, in one-letter code: MPPKSSTKAEPKASSAKTQVAKAKSAKKAVVKGTSSKTQRRIRTSVTFRRPKTLRLSRKPKYPRTSVPHAPRMDAYRTLVRPLNTESAMKKIEDNNTLLFIVDLKANKRQIADAVKKLYDVTPLRVNTLIRPDGKKKAFVRLTPEVDALDIANKIGFI.

The tract at residues 1–43 is disordered; the sequence is MPPKSSTKAEPKASSAKTQVAKAKSAKKAVVKGTSSKTQRRIR. Over residues 12 to 23 the composition is skewed to low complexity; the sequence is KASSAKTQVAKA.

Belongs to the universal ribosomal protein uL23 family.

This protein binds to a specific region on the 26S rRNA. The chain is Large ribosomal subunit protein uL23 from Puccinia graminis (Black stem rust fungus).